Consider the following 391-residue polypeptide: Inhibin beta B chain (391 aa).

A signal peptide spans 1–25 (MDGAARRGVLAALLACGLLLLGAAA). Positions 26-276 (TPTPPPAGSS…ADNKHRIRKR (251 aa)) are excised as a propeptide. A disordered region spans residues 27–47 (PTPPPAGSSPQDTCTSCGFRR). N-linked (GlcNAc...) asparagine glycosylation is present at N77. 4 disulfide bridges follow: C280/C288, C287/C356, C316/C388, and C320/C390.

This sequence belongs to the TGF-beta family. As to quaternary structure, dimeric, linked by one or more disulfide bonds. Inhibin A is a dimer of alpha and beta-A. Inhibin B is a dimer of alpha and beta-B. Activin A is a homodimer of beta-A. Activin B is a homodimer of beta-B. Activin AB is a dimer of beta-A and beta-B.

It is found in the secreted. Inhibins and activins inhibit and activate, respectively, the secretion of follitropin by the pituitary gland. Inhibins/activins are involved in regulating a number of diverse functions such as hypothalamic and pituitary hormone secretion, gonadal hormone secretion, germ cell development and maturation, erythroid differentiation, insulin secretion, nerve cell survival, embryonic axial development or bone growth, depending on their subunit composition. Inhibins appear to oppose the functions of activins. This is Inhibin beta B chain (INHBB) from Gallus gallus (Chicken).